A 132-amino-acid chain; its full sequence is Small ribosomal subunit protein uS8 (132 aa).

This sequence belongs to the universal ribosomal protein uS8 family. As to quaternary structure, part of the 30S ribosomal subunit. Contacts proteins S5 and S12.

In terms of biological role, one of the primary rRNA binding proteins, it binds directly to 16S rRNA central domain where it helps coordinate assembly of the platform of the 30S subunit. The polypeptide is Small ribosomal subunit protein uS8 (Rhizobium etli (strain CIAT 652)).